Here is a 287-residue protein sequence, read N- to C-terminus: Probable ribosomal RNA small subunit methyltransferase A (287 aa).

Positions 29, 31, 56, 77, 102, and 117 each coordinate S-adenosyl-L-methionine.

This sequence belongs to the class I-like SAM-binding methyltransferase superfamily. rRNA adenine N(6)-methyltransferase family. RsmA subfamily.

The protein resides in the cytoplasm. Its function is as follows. Specifically dimethylates two adjacent adenosines in the loop of a conserved hairpin near the 3'-end of 16S rRNA in the 30S particle. May play a critical role in biogenesis of 30S subunits. The polypeptide is Probable ribosomal RNA small subunit methyltransferase A (Methanosarcina barkeri (strain Fusaro / DSM 804)).